Here is a 90-residue protein sequence, read N- to C-terminus: uncharacterized protein (90 aa).

Positions 25 to 90 (GEAAYNSPTN…PPIAPPPILD (66 aa)) are disordered. Polar residues-rich tracts occupy residues 30–54 (NSPTNNQKSQGTNSSFGDTSPTESV) and 65–79 (NDQTSIGNSDTSNVN).

This is an uncharacterized protein from Bacillus subtilis (strain 168).